The primary structure comprises 600 residues: Jacalin-related lectin 18 (600 aa).

4 Jacalin-type lectin domains span residues Thr-12 to Cys-158, Pro-161 to Thr-303, Ser-304 to Leu-447, and Gly-454 to Pro-597.

Belongs to the jacalin lectin family.

This chain is Jacalin-related lectin 18 (JAL18), found in Arabidopsis thaliana (Mouse-ear cress).